We begin with the raw amino-acid sequence, 329 residues long: Ribosomal RNA small subunit methyltransferase H (329 aa).

S-adenosyl-L-methionine contacts are provided by residues 39–41 (GGY), Asp56, Phe85, Asp106, and Gln113. The interval 289 to 308 (SGAIRPTPEEEARNPRARSA) is disordered.

This sequence belongs to the methyltransferase superfamily. RsmH family.

The protein resides in the cytoplasm. The catalysed reaction is cytidine(1402) in 16S rRNA + S-adenosyl-L-methionine = N(4)-methylcytidine(1402) in 16S rRNA + S-adenosyl-L-homocysteine + H(+). Specifically methylates the N4 position of cytidine in position 1402 (C1402) of 16S rRNA. This is Ribosomal RNA small subunit methyltransferase H from Novosphingobium aromaticivorans (strain ATCC 700278 / DSM 12444 / CCUG 56034 / CIP 105152 / NBRC 16084 / F199).